The primary structure comprises 163 residues: MTKKDKGPKFANVTTKSGEVVKVFEDLNDFETFIKNETEDEEFDHVHCHLKYYPPFVLHESHEDPEKIKDSANSHSKKFVRHLHQHIEKHLLKDIKERIKLPDLKFKDKAKEESFEHIVWKYNDVTQYHGKDFEIHITVECHNDSAIVDVDYLTKPLTAAVEA.

Belongs to the RGI1 family.

The protein localises to the cell membrane. Its function is as follows. Involved in the control of energetic metabolism and significantly contribute to cell fitness, especially under respiratory growth conditions. This Kluyveromyces lactis (strain ATCC 8585 / CBS 2359 / DSM 70799 / NBRC 1267 / NRRL Y-1140 / WM37) (Yeast) protein is Respiratory growth induced protein 1 (RGI1).